Here is a 343-residue protein sequence, read N- to C-terminus: Protein RecA (343 aa).

68–75 (GPESSGKT) provides a ligand contact to ATP.

The protein belongs to the RecA family.

Its subcellular location is the cytoplasm. In terms of biological role, can catalyze the hydrolysis of ATP in the presence of single-stranded DNA, the ATP-dependent uptake of single-stranded DNA by duplex DNA, and the ATP-dependent hybridization of homologous single-stranded DNAs. It interacts with LexA causing its activation and leading to its autocatalytic cleavage. This Syntrophobacter fumaroxidans (strain DSM 10017 / MPOB) protein is Protein RecA.